The following is a 136-amino-acid chain: SLSHGEGKNAFYALGSGPARALATKVKDGNEEPVEELYKELGYRDHSNETAIVMEVDKVPPVEVIEKIAKACKVDASGVHVILTPTSSLAGGMQVVGRVLEVALHKAHSLHFPLGNIIDGTGTAPVPPPHPNFVKA.

Belongs to the MCH family.

It localises to the cytoplasm. The catalysed reaction is 5,10-methenyl-5,6,7,8-tetrahydromethanopterin + H2O = N(5)-formyl-5,6,7,8-tetrahydromethanopterin + H(+). Its pathway is one-carbon metabolism; formaldehyde degradation; formate from formaldehyde (H(4)MPT route): step 3/5. Catalyzes the hydrolysis of methenyl-H(4)MPT(+) to 5-formyl-H(4)MPT. The polypeptide is Methenyltetrahydromethanopterin cyclohydrolase (mch) (Methylococcus thermophilus).